A 1811-amino-acid chain; its full sequence is MTDLEIETVSRVSSNPDEVKGSSVVEEEPDSESTIKSRVSDEIDEHDSIPEQSNTEKSIEINDKNLEAEKDIESNLSLRPPEDDLDSRSIESEQTGTLSKQTTSTSEAPQDLKIWKNISNASNQNSGKLNPQLFVIEAFKHMSKAKATKRHKKLREAINNVQIELQKQPFLLPEVILEPLVMACQTNSTTLLTITLDCFAKLIDYNYFDSPTLNPSDITLMERVVNTIASCFCGESTPERVQLQIVKALLAAITSERTIIRHSFLLTAVRQTYNIFLLCKDSTTQAIAQVALLQMVDSVFQRLSTVLNHEREFSTINMNKSSSNGTPDRANSPIPSQLSENKLTLESFEHRKSFDQVREEAPLEEDSLEQQLLRDAFLLIRALCKLSIKNIPYEHEYDLKSQSMRSKLMSLHLIYHILRTYMNILSDINVKIRSPTSTPTPLIDAVKQYICLALAKNVVSHVLPVFEISCEIFWLILSELKNFFKSELEVFFTEIFFPILEMRTSSNQQKIVLLNIFHRMCEEPQTLIELYLNYDCISGNTENIYERAIVTLSRIASQSTSDPPPSFVFRDDQLVIDKPGFVYHTLNDIPQLNSSTIGSYVHSHNPPYFDYQIRLKSYRCLISTLSSLFTWCNQTFAPTVEITAKDDETESTSKGEEPQKSKSEPPSAGINSTSMDNLESSGQALATDDPSQFENLKHRKKQLQEAIQKFNYKPKEGIKILLSSHFIASKTPTDIAKFLISTEGLDKAVLGEYLGEGNDENIAIMHSFVDHMSFNDIPFVNALRSFLQKFRLPGEAQKIDRFMLKFAEKYIDDNLGVFKNADTAYILAYSIIMLNTDLHSPQVKNRMTCQDFIKNNRGVDDGANLSDSFLTEVYEEIQKNEIVLKDEQDPTSNFPEIPGTSNLSFAANISNALATVGRDLQREAYYMASNKMANKTEALFKDLIREQRERGKLSGNDIYYTARHFEHVCPMFEAVWMPILAAFSEPLQLSSDPALIQLSLDGFRLAMNVIFFFSMDLPRNAFMQTLTKFTHLNNTSELKWTNMHALKTLLEISLAHGDKLRDSWKDVLLCISQLERVQLISAGVDINSLPDVSTTKPLRKSLDKNIRQSRSGSISLKHSKSFQSASTHSTKSSSVEIVREYSSREVVMAVDMLFSNTRNLGSEGIYDFVKALIEVSWEEIECSLELSNPRLFSLQKLVEISYYNMRRIRMEWSSIWSLLGTYFTQVSCHENSIIASFALDSLRQFSMQFLEIEELSHFKFQKDFLQPFSHAMENSQDLKIKDLVLRCIDQMIKARYQNIRSGWRTIFHILAYASKIENLLVLQCAISVVSSLGHEHISCVLTQGAYIDLISCITKFAKLNGNQKFCLSCVDMLKNLEHELIKHLKHMKKESVYSKKLEEEYWLPFLLSFNEIICEASDLEVRSKALKVLFDCLYRHADDFDEEFWETVSNKALLSIFSILSITNSQRLYLAKNTEETEVWMLTTMVEALKAFIELIKNLFERLHFLLPKALNLLEKCICQENSMISKVGLSCFSQFVLKNKNQFKDVDWDEIINSINQLLQMTLPIELRDPSLYPQVNSDSSLEDVKENSFRPHEISRFNSQSVFKSKKHHLKSIVVKCTLQLLMLNCLWELFHSDNMLTNIPKRKMVKLLDILKQSWEFAESFNSDFEIRAKILSSGIVEHMPNLLSQEALCAKLYFYTAFECMSSLKSDSHDTEEYNDLMDVFQKKIYLASQLVLHGFQRVIGDNPVKGVAAFQPVIAALVSYINSLDEIQFSRGKSEFYQLLCAIVACGHIDQQLGTSLSNAFLRYAC.

Disordered regions lie at residues 1–108 (MTDL…TSEA) and 316–336 (INMN…PIPS). Basic and acidic residues-rich tracts occupy residues 33 to 49 (STIK…HDSI), 57 to 73 (KSIE…KDIE), and 80 to 91 (PPEDDLDSRSIE). Ser-40 is modified (phosphoserine). 2 stretches are compositionally biased toward polar residues: residues 92-108 (SEQT…TSEA) and 316-326 (INMNKSSSNGT). The residue at position 326 (Thr-326) is a Phosphothreonine. Phosphoserine is present on residues Ser-332 and Ser-353. An HUS box motif is present at residues 533–537 (NYDCI). Residues 643 to 663 (TAKDDETESTSKGEEPQKSKS) show a composition bias toward basic and acidic residues. The disordered stretch occupies residues 643-688 (TAKDDETESTSKGEEPQKSKSEPPSAGINSTSMDNLESSGQALATD). Residues 669–688 (GINSTSMDNLESSGQALATD) are compositionally biased toward polar residues. The SEC7 domain maps to 692 to 880 (QFENLKHRKK…TEVYEEIQKN (189 aa)). Ser-741 carries the phosphoserine modification. Phosphothreonine is present on Thr-742. Residue Asp-812 participates in Mg(2+) binding. Residues 889 to 1103 (DPTSNFPEIP…TTKPLRKSLD (215 aa)) form an HDS1 domain region.

Its subcellular location is the cytoplasm. It is found in the golgi apparatus. The protein resides in the trans-Golgi network. The protein localises to the cytoplasmic vesicle. It localises to the COPI-coated vesicle membrane. Its subcellular location is the COPII-coated vesicle membrane. Guanine exchange factor that acts as an activator of arf1 at the trans-Golgi net-work and is thus involved in vesicular budding and traffic between compartments of the Golgi apparatus. Activation of Arf (ADP-ribosylation factor) GTPases is essential for vesicle formation via recruitment of cargo adapters and coat proteins necessary for Golgi trafficking. Involved in tunicamycin-induced ER stress response and subsequent apoptosis. This chain is ADP-ribosylation factor guanine nucleotide-exchange factor sec71, found in Schizosaccharomyces pombe (strain 972 / ATCC 24843) (Fission yeast).